A 318-amino-acid polypeptide reads, in one-letter code: Cytochrome c biogenesis protein CcsA (318 aa).

8 helical membrane-spanning segments follow: residues 17 to 37 (VLALGLAAFALLLLAIPISFW), 45 to 65 (SAVVTLLVALANLVLTAQLVL), 75 to 95 (ISNLYESLCFLAWACTLAQLL), 104 to 124 (IVSAAATPMALLCVAFASFAL), 149 to 169 (VIMCSYAALLVGSFLSMAVLF), 224 to 244 (TITVGFLLLTLGLISGAVWAN), 258 to 275 (TWALICWMVYAAYLHTRF), and 287 to 307 (VAVAGIVVIVVCYIGVNLLGI).

It belongs to the CcmF/CycK/Ccl1/NrfE/CcsA family. In terms of assembly, may interact with ccs1.

Its subcellular location is the cellular thylakoid membrane. In terms of biological role, required during biogenesis of c-type cytochromes (cytochrome c6 and cytochrome f) at the step of heme attachment. The polypeptide is Cytochrome c biogenesis protein CcsA (Prochlorococcus marinus (strain MIT 9313)).